The primary structure comprises 285 residues: Probable endonuclease 4 (285 aa).

9 residues coordinate Zn(2+): His-69, His-109, Glu-145, Asp-179, His-182, His-216, Asp-229, His-231, and Glu-261.

The protein belongs to the AP endonuclease 2 family. It depends on Zn(2+) as a cofactor.

It catalyses the reaction Endonucleolytic cleavage to 5'-phosphooligonucleotide end-products.. Endonuclease IV plays a role in DNA repair. It cleaves phosphodiester bonds at apurinic or apyrimidinic (AP) sites, generating a 3'-hydroxyl group and a 5'-terminal sugar phosphate. In Citrobacter koseri (strain ATCC BAA-895 / CDC 4225-83 / SGSC4696), this protein is Probable endonuclease 4.